The following is a 156-amino-acid chain: SsrA-binding protein (156 aa).

This sequence belongs to the SmpB family.

Its subcellular location is the cytoplasm. Its function is as follows. Required for rescue of stalled ribosomes mediated by trans-translation. Binds to transfer-messenger RNA (tmRNA), required for stable association of tmRNA with ribosomes. tmRNA and SmpB together mimic tRNA shape, replacing the anticodon stem-loop with SmpB. tmRNA is encoded by the ssrA gene; the 2 termini fold to resemble tRNA(Ala) and it encodes a 'tag peptide', a short internal open reading frame. During trans-translation Ala-aminoacylated tmRNA acts like a tRNA, entering the A-site of stalled ribosomes, displacing the stalled mRNA. The ribosome then switches to translate the ORF on the tmRNA; the nascent peptide is terminated with the 'tag peptide' encoded by the tmRNA and targeted for degradation. The ribosome is freed to recommence translation, which seems to be the essential function of trans-translation. Required for trans-translation. Probably required for sporulation; deletion of the gene for tmRNA impairs sporulation via its effect on trans-translation, and as smpB is required for trans-translation under non-stress conditions, it is also probably required during sporulation. This is SsrA-binding protein from Bacillus subtilis (strain 168).